A 251-amino-acid polypeptide reads, in one-letter code: MASRDDLVYMAKLAEQAERFDEMVDHMKAVAQQPKELSVEERNLLSVAYKNVIGSRRASWRVISSIEGKDTVSDQLPLIRDYKSKIETELTDICADILKIIEAELIPNSTSEEGKVFYYKMKGDYHRYLAEFQSADERKTSASDALDAYQLASDHANQDLPPTHPIRLGLALNFSVFYYEILNSPDRACGLAKAAFDDAIAELDTLSEESYKDSTLIIMQLLRDNLTLWTSDQGEAEEAPGNADGTVVEDL.

The protein belongs to the 14-3-3 family.

This Fucus vesiculosus (Bladder wrack) protein is 14-3-3-like protein.